Here is a 362-residue protein sequence, read N- to C-terminus: Heme A synthase (362 aa).

The next 5 membrane-spanning stretches (helical) occupy residues 12 to 32 (AVKIWLGAIAALIAAMVLVGG), 102 to 122 (VIGLAYLLPFLWFIWRGHLGG), 128 to 148 (LWLIFGLGALQGAVGWWMVAS), 159 to 179 (ERLAIHLTLALVIFAAIVWTL), and 198 to 218 (AAALLALTFVQIFFGALVAGL). Histidine 262 lines the heme pocket. The next 3 membrane-spanning stretches (helical) occupy residues 264–286 (MLAYALWALAIAHAIDAVRARAG), 291–311 (GAVWFAAALTLQAALGIFTLL), and 314–334 (VPIGLALAHQAVAVLVLMLGV). Histidine 322 serves as a coordination point for heme.

Belongs to the COX15/CtaA family. Type 2 subfamily. Interacts with CtaB. Requires heme b as cofactor.

It localises to the cell membrane. It catalyses the reaction Fe(II)-heme o + 2 A + H2O = Fe(II)-heme a + 2 AH2. It participates in porphyrin-containing compound metabolism; heme A biosynthesis; heme A from heme O: step 1/1. Its function is as follows. Catalyzes the conversion of heme O to heme A by two successive hydroxylations of the methyl group at C8. The first hydroxylation forms heme I, the second hydroxylation results in an unstable dihydroxymethyl group, which spontaneously dehydrates, resulting in the formyl group of heme A. This Rhodopseudomonas palustris (strain BisA53) protein is Heme A synthase.